The following is a 417-amino-acid chain: Hydroxysteroid dehydrogenase-like protein 2 (417 aa).

Residues 17–23, lysine 42, and aspartate 74 contribute to the NADP(+) site; that span reads GASRGIG. Tyrosine 168 serves as the catalytic Proton acceptor. Residue lysine 172 participates in NADP(+) binding. Residues 306 to 414 form the SCP2 domain; the sequence is ASPLQETFKA…KLEKILGQMN (109 aa).

Belongs to the short-chain dehydrogenases/reductases (SDR) family.

It localises to the peroxisome. The protein resides in the mitochondrion. Has apparently no steroid dehydrogenase activity. Might act as a metabolic regulator that affects systemic adaptation to nutritional cues. This Xenopus laevis (African clawed frog) protein is Hydroxysteroid dehydrogenase-like protein 2 (hsdl2).